A 211-amino-acid polypeptide reads, in one-letter code: Adenylate kinase (211 aa).

An ATP-binding site is contributed by 10-15; sequence GAGKGT. Residues 30 to 59 are NMP; that stretch reads STGGILRAAIQKQTALGKKVQKVVEVGGLV. Residues Thr31, Arg36, 57 to 59, 85 to 88, and Gln92 contribute to the AMP site; these read GLV and GFPR. Residues 121-158 are LID; that stretch reads GRRVCSACGSSYHVLFAQPKREGVCDRCRGVLVVREDD. Arg122 is an ATP binding site. The Zn(2+) site is built by Cys125 and Cys128. 131-132 provides a ligand contact to ATP; the sequence is SY. Residues Cys145 and Cys148 each contribute to the Zn(2+) site. Positions 155 and 166 each coordinate AMP. Residue Pro194 coordinates ATP.

The protein belongs to the adenylate kinase family. As to quaternary structure, monomer.

It localises to the cytoplasm. It carries out the reaction AMP + ATP = 2 ADP. Its pathway is purine metabolism; AMP biosynthesis via salvage pathway; AMP from ADP: step 1/1. Catalyzes the reversible transfer of the terminal phosphate group between ATP and AMP. Plays an important role in cellular energy homeostasis and in adenine nucleotide metabolism. In Treponema pallidum (strain Nichols), this protein is Adenylate kinase.